Reading from the N-terminus, the 213-residue chain is Protein DMP4 (213 aa).

4 consecutive transmembrane segments (helical) span residues 51 to 71 (LANL…PIFS), 78 to 98 (LVSK…CFIL), 142 to 162 (FIDF…VLFD), and 180 to 200 (VLTA…ATFP).

It belongs to the plant DMP1 protein family. In terms of tissue distribution, expressed in leaves, flowers and siliques, especially in vascular tissues.

The protein localises to the vacuole membrane. Functionally, involved in membrane remodeling. The sequence is that of Protein DMP4 from Arabidopsis thaliana (Mouse-ear cress).